The chain runs to 252 residues: tRNA pseudouridine synthase A (252 aa).

The active-site Nucleophile is the Asp52. Tyr111 lines the substrate pocket.

The protein belongs to the tRNA pseudouridine synthase TruA family. Homodimer.

It catalyses the reaction uridine(38/39/40) in tRNA = pseudouridine(38/39/40) in tRNA. Functionally, formation of pseudouridine at positions 38, 39 and 40 in the anticodon stem and loop of transfer RNAs. The protein is tRNA pseudouridine synthase A of Parabacteroides distasonis (strain ATCC 8503 / DSM 20701 / CIP 104284 / JCM 5825 / NCTC 11152).